A 33-amino-acid polypeptide reads, in one-letter code: Defensin-1 (33 aa).

Disulfide bonds link Cys-4/Cys-32, Cys-6/Cys-21, and Cys-11/Cys-31.

This sequence belongs to the alpha-defensin family.

It is found in the secreted. Functionally, has antibacterial activity against the Gram-negative bacterium E.coli and the Gram-positive bacteria L.monocytogenes and S.aureus. Has antifungal activity against C.albicans. The polypeptide is Defensin-1 (Papio hamadryas (Hamadryas baboon)).